A 154-amino-acid chain; its full sequence is Endoribonuclease YbeY (154 aa).

Zn(2+) contacts are provided by His114, His118, and His124.

It belongs to the endoribonuclease YbeY family. The cofactor is Zn(2+).

Its subcellular location is the cytoplasm. Single strand-specific metallo-endoribonuclease involved in late-stage 70S ribosome quality control and in maturation of the 3' terminus of the 16S rRNA. This is Endoribonuclease YbeY from Aggregatibacter actinomycetemcomitans (Actinobacillus actinomycetemcomitans).